We begin with the raw amino-acid sequence, 372 residues long: tRNA-specific 2-thiouridylase MnmA (372 aa).

Residues 11-18 and Met-37 each bind ATP; that span reads GMSGGVDS. Residues 97–99 form an interaction with target base in tRNA region; that stretch reads NPD. Cys-102 (nucleophile) is an active-site residue. Cys-102 and Cys-199 are oxidised to a cystine. Gly-126 provides a ligand contact to ATP. The tract at residues 149–151 is interaction with tRNA; that stretch reads KDQ. Cys-199 acts as the Cysteine persulfide intermediate in catalysis. The interval 309-310 is interaction with tRNA; sequence RY.

The protein belongs to the MnmA/TRMU family.

It is found in the cytoplasm. It carries out the reaction S-sulfanyl-L-cysteinyl-[protein] + uridine(34) in tRNA + AH2 + ATP = 2-thiouridine(34) in tRNA + L-cysteinyl-[protein] + A + AMP + diphosphate + H(+). Functionally, catalyzes the 2-thiolation of uridine at the wobble position (U34) of tRNA, leading to the formation of s(2)U34. The polypeptide is tRNA-specific 2-thiouridylase MnmA (Staphylococcus aureus (strain bovine RF122 / ET3-1)).